The following is a 518-amino-acid chain: Sugar transport protein MST3 (518 aa).

The Cytoplasmic portion of the chain corresponds to 1 to 18 (MAGGAVVSTGAGKDYPGK). The helical transmembrane segment at 19–39 (LTLFVFFTCVVAATGGLIFGY) threads the bilayer. Residues 40–80 (DIGISGGVTSMDPFLRKFFPEVYRKKQMADKNNQYCKYDNQ) are Extracellular-facing. Residues 81–101 (LLQTFTSSLYLAALVSSFFAA) form a helical membrane-spanning segment. The Cytoplasmic portion of the chain corresponds to 102–117 (TVTRVLGRKWSMFAGG). The helical transmembrane segment at 118–138 (LTFLIGAALNGAAENVAMLIV) threads the bilayer. At 139 to 140 (GR) the chain is on the extracellular side. A helical membrane pass occupies residues 141–161 (ILLGVGVGFANQSVPVYLSEM). At 162-167 (APARLR) the chain is on the cytoplasmic side. Residues 168 to 188 (GMLNIGFQLMITIGILAAELI) form a helical membrane-spanning segment. At 189–202 (NYGTAKIKAGWGWR) the chain is on the extracellular side. A helical membrane pass occupies residues 203–223 (VSLALAAVPAAIITLGSLFLP). Over 224–290 (DTPNSLIDRG…YRAQLTMAIC (67 aa)) the chain is Cytoplasmic. A helical membrane pass occupies residues 291 to 311 (IPFFQQLTGINVIMFYAPVLF). Residues 312–322 (DTLGFKSDASL) are Extracellular-facing. Residues 323 to 343 (MSAVITGLVNVFATLVSIFTV) traverse the membrane as a helical segment. Residues 344 to 351 (DRLGRRKL) lie on the Cytoplasmic side of the membrane. The chain crosses the membrane as a helical span at residues 352 to 372 (FLQGGAQMVVCQVVVGTLIAV). Over 373–387 (KFGTSGIGDIPKGYA) the chain is Extracellular. A helical transmembrane segment spans residues 388 to 408 (AVVVLFICMYVAGFAWSWGPL). The Cytoplasmic segment spans residues 409-427 (GWLVPSEIFPLEIRPAGQS). A helical transmembrane segment spans residues 428 to 448 (INVSVNMLFTFVIAQAFLTML). At 449 to 452 (CHMK) the chain is on the extracellular side. The chain crosses the membrane as a helical span at residues 453–473 (FGLFYFFAGWVVIMTVFIALF). Topologically, residues 474–518 (LPETKNVPIEEMVLVWKSHWFWRRFIGDHDVHVGANHVSNNKLQP) are cytoplasmic.

The protein belongs to the major facilitator superfamily. Sugar transporter (TC 2.A.1.1) family. Highly expressed in roots. Expressed in xylem and sclerenchyma cells of roots. Expressed at low levels in leaves.

The protein localises to the membrane. Functionally, mediates active uptake of hexoses by sugar:proton symport. Can transport glucose, xylose and 3-O-methylglucose. May be involved in the accumulation of monosaccharides required for cell wall synthesis during root development. The polypeptide is Sugar transport protein MST3 (Oryza sativa subsp. japonica (Rice)).